The sequence spans 469 residues: Tetratricopeptide repeat protein 38 (469 aa).

An N-acetylalanine modification is found at Ala2. Phosphoserine is present on Ser5. 3 TPR repeats span residues 108-141, 180-213, and 252-285; these read REQLHVSAVETFAKGNFPKACELWEQILQDHPTD, SYVKGIYSFGLMETNFYDQAEKLAKEALSINPTD, and CHNYWHWALYLIEKGEYEAALTIYDTHILPSLQA.

Belongs to the TTC38 family.

The chain is Tetratricopeptide repeat protein 38 (TTC38) from Pongo abelii (Sumatran orangutan).